We begin with the raw amino-acid sequence, 109 residues long: Large ribosomal subunit protein uL22 (109 aa).

It belongs to the universal ribosomal protein uL22 family. In terms of assembly, part of the 50S ribosomal subunit.

In terms of biological role, this protein binds specifically to 23S rRNA; its binding is stimulated by other ribosomal proteins, e.g. L4, L17, and L20. It is important during the early stages of 50S assembly. It makes multiple contacts with different domains of the 23S rRNA in the assembled 50S subunit and ribosome. The globular domain of the protein is located near the polypeptide exit tunnel on the outside of the subunit, while an extended beta-hairpin is found that lines the wall of the exit tunnel in the center of the 70S ribosome. This is Large ribosomal subunit protein uL22 from Psychrobacter cryohalolentis (strain ATCC BAA-1226 / DSM 17306 / VKM B-2378 / K5).